A 396-amino-acid chain; its full sequence is Na(+)/H(+) antiporter NhaA (396 aa).

Helical transmembrane passes span 14 to 34 (ASGI…NSGL), 59 to 79 (LLLW…GLEV), 95 to 115 (TFPA…YTFF), 124 to 144 (AGWA…MALL), 154 to 174 (VFLL…IALF), 178 to 198 (QLSL…LWMN), 205 to 225 (IGLY…SGVH), 254 to 274 (ALHP…NAGV), 278 to 298 (GIGL…GLFV), 328 to 348 (IFAV…IASL), and 363 to 383 (LGIL…LRMS).

The protein belongs to the NhaA Na(+)/H(+) (TC 2.A.33) antiporter family.

It is found in the cell inner membrane. It catalyses the reaction Na(+)(in) + 2 H(+)(out) = Na(+)(out) + 2 H(+)(in). Na(+)/H(+) antiporter that extrudes sodium in exchange for external protons. The chain is Na(+)/H(+) antiporter NhaA from Aeromonas salmonicida (strain A449).